The sequence spans 285 residues: MVMRPLWSLLLWEALLPITVTGAQVLSKVGGSVLLVAARPPGFQVREAIWRSLWPSEELLATFFRGSLETLYHSRFLGRAQLHSNLSLELGPLESGDSGNFSVLMVDTRGQPWTQTLQLKVYDAVPRPVVQVFIAVERDAQPSKTCQVFLSCWAPNISEITYSWRRETTMDFGMEPHSLFTDGQVLSISLGPGDRDVAYSCIVSNPVSWDLATVTPWDSCHHEAAPGKASYKDVLLVVVPVSLLLMLVTLFSAWHWCPCSGKKKKDVHADRVGPETENPLVQDLP.

The first 22 residues, 1–22 (MVMRPLWSLLLWEALLPITVTG), serve as a signal peptide directing secretion. The Extracellular segment spans residues 23–233 (AQVLSKVGGS…AAPGKASYKD (211 aa)). N-linked (GlcNAc...) asparagine glycosylation is present at asparagine 85. The Ig-like C2-type domain maps to 128–215 (PVVQVFIAVE…PVSWDLATVT (88 aa)). Cysteine 152 and cysteine 201 form a disulfide bridge. Residues 234–254 (VLLVVVPVSLLLMLVTLFSAW) form a helical membrane-spanning segment. Over 255 to 285 (HWCPCSGKKKKDVHADRVGPETENPLVQDLP) the chain is Cytoplasmic. Residues 262–285 (KKKKDVHADRVGPETENPLVQDLP) form a disordered region.

As to expression, expressed in lymph node, spleen, thymus and bone marrow.

It is found in the membrane. Its function is as follows. May play a role in B-lineage commitment and/or modulation of signaling through the B-cell receptor. The chain is SLAM family member 8 (SLAMF8) from Homo sapiens (Human).